We begin with the raw amino-acid sequence, 503 residues long: Aromatase (503 aa).

Cysteine 437 serves as a coordination point for heme.

Belongs to the cytochrome P450 family. Heme serves as cofactor.

It localises to the membrane. It carries out the reaction testosterone + 3 reduced [NADPH--hemoprotein reductase] + 3 O2 = 17beta-estradiol + formate + 3 oxidized [NADPH--hemoprotein reductase] + 4 H2O + 4 H(+). The enzyme catalyses androst-4-ene-3,17-dione + 3 reduced [NADPH--hemoprotein reductase] + 3 O2 = estrone + formate + 3 oxidized [NADPH--hemoprotein reductase] + 4 H2O + 4 H(+). Its function is as follows. Catalyzes the formation of aromatic C18 estrogens from C19 androgens. The polypeptide is Aromatase (CYP19A1) (Oryctolagus cuniculus (Rabbit)).